The following is a 40-amino-acid chain: Potassium channel toxin alpha-KTx 12.2 (40 aa).

Cystine bridges form between Cys2-Cys5, Cys10-Cys31, Cys16-Cys36, and Cys20-Cys38.

The protein belongs to the short scorpion toxin superfamily. Potassium channel inhibitor family. Alpha-KTx 12 subfamily. In terms of tissue distribution, expressed by the venom gland.

It is found in the secreted. Inhibits high conductance calcium-activated potassium channels. Reversibly inhibits Shaker B potassium channels. This Tityus trivittatus (Argentinean scorpion) protein is Potassium channel toxin alpha-KTx 12.2.